We begin with the raw amino-acid sequence, 348 residues long: L-threonine 3-dehydrogenase (348 aa).

Residue Cys38 coordinates Zn(2+). Active-site charge relay system residues include Thr40 and His43. Residues His63, Glu64, Cys93, Cys96, Cys99, and Cys107 each coordinate Zn(2+). NAD(+) contacts are provided by residues Ile175, Asp195, Arg200, 263–265 (LGI), and 287–288 (IY).

This sequence belongs to the zinc-containing alcohol dehydrogenase family. In terms of assembly, homotetramer. Requires Zn(2+) as cofactor.

It localises to the cytoplasm. It catalyses the reaction L-threonine + NAD(+) = (2S)-2-amino-3-oxobutanoate + NADH + H(+). Its pathway is amino-acid degradation; L-threonine degradation via oxydo-reductase pathway; glycine from L-threonine: step 1/2. Functionally, catalyzes the NAD(+)-dependent oxidation of L-threonine to 2-amino-3-ketobutyrate. This is L-threonine 3-dehydrogenase from Deinococcus radiodurans (strain ATCC 13939 / DSM 20539 / JCM 16871 / CCUG 27074 / LMG 4051 / NBRC 15346 / NCIMB 9279 / VKM B-1422 / R1).